A 343-amino-acid chain; its full sequence is Biotin synthase (343 aa).

Positions 36–254 (RQVQVSTLLS…IAVARIMMPR (219 aa)) constitute a Radical SAM core domain. [4Fe-4S] cluster contacts are provided by C51, C55, and C58. Residues C95, C126, C186, and R258 each coordinate [2Fe-2S] cluster.

This sequence belongs to the radical SAM superfamily. Biotin synthase family. In terms of assembly, homodimer. [4Fe-4S] cluster serves as cofactor. [2Fe-2S] cluster is required as a cofactor.

The enzyme catalyses (4R,5S)-dethiobiotin + (sulfur carrier)-SH + 2 reduced [2Fe-2S]-[ferredoxin] + 2 S-adenosyl-L-methionine = (sulfur carrier)-H + biotin + 2 5'-deoxyadenosine + 2 L-methionine + 2 oxidized [2Fe-2S]-[ferredoxin]. The protein operates within cofactor biosynthesis; biotin biosynthesis; biotin from 7,8-diaminononanoate: step 2/2. Functionally, catalyzes the conversion of dethiobiotin (DTB) to biotin by the insertion of a sulfur atom into dethiobiotin via a radical-based mechanism. This is Biotin synthase from Erwinia tasmaniensis (strain DSM 17950 / CFBP 7177 / CIP 109463 / NCPPB 4357 / Et1/99).